A 349-amino-acid polypeptide reads, in one-letter code: UDP-N-acetylenolpyruvoylglucosamine reductase (349 aa).

An FAD-binding PCMH-type domain is found at 25 to 213 (VGPVARRLVT…VEQGERTDPQ (189 aa)). The active site involves Arg-165. The active-site Proton donor is Ser-242. The active site involves Glu-341.

The protein belongs to the MurB family. The cofactor is FAD.

The protein localises to the cytoplasm. It carries out the reaction UDP-N-acetyl-alpha-D-muramate + NADP(+) = UDP-N-acetyl-3-O-(1-carboxyvinyl)-alpha-D-glucosamine + NADPH + H(+). It functions in the pathway cell wall biogenesis; peptidoglycan biosynthesis. Its function is as follows. Cell wall formation. This is UDP-N-acetylenolpyruvoylglucosamine reductase from Mycolicibacterium gilvum (strain PYR-GCK) (Mycobacterium gilvum (strain PYR-GCK)).